The following is a 137-amino-acid chain: Large ribosomal subunit protein uL16 (137 aa).

The protein belongs to the universal ribosomal protein uL16 family. Part of the 50S ribosomal subunit.

Its function is as follows. Binds 23S rRNA and is also seen to make contacts with the A and possibly P site tRNAs. In Rhizobium rhizogenes (strain K84 / ATCC BAA-868) (Agrobacterium radiobacter), this protein is Large ribosomal subunit protein uL16.